A 1105-amino-acid chain; its full sequence is AP-3 complex subunit beta-1 (1105 aa).

Disordered regions lie at residues 1-26 (MSSNSFAYNEQSGGGEAAELGQEATS) and 271-292 (KNFYESEEEEEEKEKSSRKKSY). Phosphoserine occurs at positions 276 and 610. The tract at residues 668–824 (KKEKPMKKFY…KPQQERHPPS (157 aa)) is disordered. The span at 679–704 (ESEEEEDEDEDEDEEEEEKEDEDENP) shows a compositional bias: acidic residues. Low complexity-rich tracts occupy residues 705 to 722 (SDSSSDSESGSGSESGDT) and 730 to 741 (DSSSGQDSETGS). Over residues 750-759 (VAKRNSKTKR) the composition is skewed to basic residues. Basic and acidic residues predominate over residues 760–774 (KSDSENREKKNENSK). Phosphoserine is present on residues S761 and S763. Positions 775–788 (ASESSSEESSSMED) are enriched in low complexity. Over residues 789 to 799 (SSSESESESGS) the composition is skewed to acidic residues. Basic and acidic residues predominate over residues 811 to 824 (AKERKPQQERHPPS).

Belongs to the adaptor complexes large subunit family. Adaptor protein complex 3 (AP-3) is a heterotetramer composed of two large adaptins (delta-type subunit AP3D1 and beta-type subunit AP3B1 or AP3B2), a medium adaptin (mu-type subunit AP3M1 or AP3M2) and a small adaptin (sigma-type subunit APS1 or AP3S2). AP-3 associates with the BLOC-1 complex. Interacts with KIF3A; interaction is direct; interaction is impaired by pyrophosphorylation of AP3B1. Post-translationally, phosphorylated on serine residues. Pyrophosphorylated by 5-diphosphoinositol pentakisphosphate (5-IP7). Pyrophosphorylation impairs interaction with KIF3A. Serine pyrophosphorylation is achieved by Mg(2+)-dependent, but enzyme independent transfer of a beta-phosphate from a inositol pyrophosphate to a pre-phosphorylated serine residue. In terms of tissue distribution, ubiquitously expressed.

The protein resides in the cytoplasmic vesicle. It is found in the clathrin-coated vesicle membrane. The protein localises to the golgi apparatus. Functionally, subunit of non-clathrin- and clathrin-associated adaptor protein complex 3 (AP-3) that plays a role in protein sorting in the late-Golgi/trans-Golgi network (TGN) and/or endosomes. The AP complexes mediate both the recruitment of clathrin to membranes and the recognition of sorting signals within the cytosolic tails of transmembrane cargo molecules. AP-3 appears to be involved in the sorting of a subset of transmembrane proteins targeted to lysosomes and lysosome-related organelles. In concert with the BLOC-1 complex, AP-3 is required to target cargos into vesicles assembled at cell bodies for delivery into neurites and nerve terminals. This is AP-3 complex subunit beta-1 (Ap3b1) from Mus musculus (Mouse).